A 547-amino-acid polypeptide reads, in one-letter code: Glucose-6-phosphate isomerase 2 (547 aa).

The active-site Proton donor is glutamate 351. Active-site residues include histidine 382 and lysine 508.

This sequence belongs to the GPI family.

The protein localises to the cytoplasm. It catalyses the reaction alpha-D-glucose 6-phosphate = beta-D-fructose 6-phosphate. It participates in carbohydrate biosynthesis; gluconeogenesis. Its pathway is carbohydrate degradation; glycolysis; D-glyceraldehyde 3-phosphate and glycerone phosphate from D-glucose: step 2/4. Functionally, catalyzes the reversible isomerization of glucose-6-phosphate to fructose-6-phosphate. The protein is Glucose-6-phosphate isomerase 2 of Neisseria meningitidis serogroup A / serotype 4A (strain DSM 15465 / Z2491).